The sequence spans 444 residues: Tubulin beta chain (444 aa).

Positions 11, 69, 138, 142, 143, 144, 204, and 226 each coordinate GTP. Residue glutamate 69 participates in Mg(2+) binding.

It belongs to the tubulin family. Dimer of alpha and beta chains. A typical microtubule is a hollow water-filled tube with an outer diameter of 25 nm and an inner diameter of 15 nM. Alpha-beta heterodimers associate head-to-tail to form protofilaments running lengthwise along the microtubule wall with the beta-tubulin subunit facing the microtubule plus end conferring a structural polarity. Microtubules usually have 13 protofilaments but different protofilament numbers can be found in some organisms and specialized cells. It depends on Mg(2+) as a cofactor.

It localises to the cytoplasm. It is found in the cytoskeleton. Tubulin is the major constituent of microtubules, a cylinder consisting of laterally associated linear protofilaments composed of alpha- and beta-tubulin heterodimers. Microtubules grow by the addition of GTP-tubulin dimers to the microtubule end, where a stabilizing cap forms. Below the cap, tubulin dimers are in GDP-bound state, owing to GTPase activity of alpha-tubulin. This chain is Tubulin beta chain, found in Euplotoides octocarinatus (Freshwater ciliate).